We begin with the raw amino-acid sequence, 162 residues long: uncharacterized protein (162 aa).

The N-terminal stretch at 1–34 is a signal peptide; it reads MAREVISTSILMIATVVAVTAAIMVILPAVKDLA.

This is an uncharacterized protein from Archaeoglobus fulgidus (strain ATCC 49558 / DSM 4304 / JCM 9628 / NBRC 100126 / VC-16).